A 701-amino-acid chain; its full sequence is E3 ubiquitin-protein ligase RNF19B (701 aa).

A disordered region spans residues 1 to 97; that stretch reads MGSEKDSESP…PAEPLSTSQA (97 aa). Residues 1 to 304 are required for ubiquitin ligase activity and for protection against staurosporin-induced cell death; it reads MGSEKDSESP…VCGCEFCWLC (304 aa). Positions 57 to 72 are enriched in low complexity; sequence QQLHQQQQIQQQQLLQ. The segment at 103 to 323 is TRIAD supradomain; it reads ELLECPLCLV…LSPSGCTFWG (221 aa). Zn(2+)-binding residues include cysteine 107, cysteine 110, cysteine 130, cysteine 133, cysteine 194, cysteine 199, cysteine 216, cysteine 221, cysteine 226, cysteine 229, histidine 234, cysteine 239, cysteine 273, and cysteine 276. Residues 107–156 form an RING-type 1 zinc finger; it reads CPLCLVRQPAEQLPELQGCSHRSCLCCLRQYLRIEITESRVQLSCPECAE. The IBR-type zinc finger occupies 174 to 239; that stretch reads EKYEEFLLRR…KQAWHPNQTC (66 aa). Residues 273–304 form an RING-type 2; atypical zinc finger; that stretch reads CPRCGAYIIKMNDGSCNHMTCAVCGCEFCWLC. Cysteine 288 is an active-site residue. Zn(2+) is bound by residues cysteine 293, cysteine 296, cysteine 301, cysteine 304, histidine 312, and cysteine 319. The next 2 membrane-spanning stretches (helical) occupy residues 340–360 and 396–416; these read LIGAPVGITLIAGIAVPAMVI and IITAPVIAAVSVGIGVPIMLA. 2 disordered regions span residues 472–495 and 658–677; these read LEGAASGLSTTSPSEGLSVAPGGL and AELTSDDCDSPHPKSCHGAP.

Belongs to the RBR family. RNF19 subfamily. Interacts with UBE2L3, UBE2L6 and UCKL1.

It is found in the cytoplasmic granule membrane. It localises to the endoplasmic reticulum membrane. The catalysed reaction is [E2 ubiquitin-conjugating enzyme]-S-ubiquitinyl-L-cysteine + [acceptor protein]-L-lysine = [E2 ubiquitin-conjugating enzyme]-L-cysteine + [acceptor protein]-N(6)-ubiquitinyl-L-lysine.. The protein operates within protein modification; protein ubiquitination. Functionally, E3 ubiquitin-protein ligase which accepts ubiquitin from E2 ubiquitin-conjugating enzymes UBE2L3 and UBE2L6 in the form of a thioester and then directly transfers the ubiquitin to targeted substrates, such as UCKL1. Involved in the cytolytic activity of natural killer cells and cytotoxic T-cells. Protects against staurosporin-induced cell death. This is E3 ubiquitin-protein ligase RNF19B (rnf19b) from Danio rerio (Zebrafish).